Reading from the N-terminus, the 128-residue chain is MTTNNSTLLDTIQQGFRITVGATASLVETLQDPQKRQGTFQDLQQEWDQRASQWAQKGTTTETEARQYVDQLLAQWRQSLPNPLSKTTATGSNNIIDFATAKRELDRLTEEIATLKGELAQDKPGTEG.

The stretch at 95–123 forms a coiled coil; that stretch reads IIDFATAKRELDRLTEEIATLKGELAQDK.

The protein localises to the cellular thylakoid membrane. This is an uncharacterized protein from Synechocystis sp. (strain ATCC 27184 / PCC 6803 / Kazusa).